Here is a 557-residue protein sequence, read N- to C-terminus: MAAALPPMLLLLLLLLLHHPAAANPDAKRLYDDLLSNYNRLIRPVSNNTDTVLVKLGLRLSQLIDLNLKDQILTTNVWLEHEWQDHKFRWDPAEYGGVTELYVPSEHIWLPDIVLYNNADGEYVVTTMTKAVLHHTGKVVWTPPAIFKSSCEIDVRYFPFDQQTCFMKFGSWTYDGDQIDLKHINQKYDDNKVKVGIDLREYYPSVEWDILGVPAERHEKYYPCCAEPYPDIFFNITLRRKTLFYTVNLIVPCVGISYLSVLVFYLPADSGEKIALCISILLSQTMFFLLISEIIPSTSLALPLLGKYLLFTMVLVGLSVVITIMVLNVHYRKPSTHKMAPWVRKVFIRRLPKLLLMRVPEQLLADLASKRLLRHAHNSKLSAAAAAAVAAAASSSAASSPDSLRHHHLHQHQHQHHLQLHHLQRPGGCNGLHSATNRFGGSAGAFGGLPSVVGLDGSLSDVATRKKYPFELEKAIHNVLFIQNHMQRQDEFDAEDQDWGFVAMVLDRLFLWIFTIASIVGTFAILCEAPALYDDTKPIDMELSSVAQQQFLPDIDF.

A signal peptide spans 1–23; sequence MAAALPPMLLLLLLLLLHHPAAA. The Extracellular segment spans residues 24 to 244; that stretch reads NPDAKRLYDD…NITLRRKTLF (221 aa). N-linked (GlcNAc...) asparagine glycosylation occurs at asparagine 47. 2 cysteine pairs are disulfide-bonded: cysteine 151–cysteine 165 and cysteine 224–cysteine 225. N-linked (GlcNAc...) asparagine glycosylation is present at asparagine 235. 3 helical membrane-spanning segments follow: residues 245-266, 274-294, and 308-329; these read YTVN…VFYL, IALC…ISEI, and YLLF…VLNV. The Cytoplasmic portion of the chain corresponds to 330–500; sequence HYRKPSTHKM…EFDAEDQDWG (171 aa). Residues 501–523 form a helical membrane-spanning segment; it reads FVAMVLDRLFLWIFTIASIVGTF.

It belongs to the ligand-gated ion channel (TC 1.A.9) family. Acetylcholine receptor (TC 1.A.9.1) subfamily.

The protein localises to the postsynaptic cell membrane. It localises to the cell membrane. After binding acetylcholine, the AChR responds by an extensive change in conformation that affects all subunits and leads to opening of an ion-conducting channel across the plasma membrane. The chain is Acetylcholine receptor subunit alpha-L1 from Schistocerca gregaria (Desert locust).